A 511-amino-acid chain; its full sequence is Bifunctional purine biosynthesis protein PurH (511 aa).

The MGS-like domain occupies 1–145; that stretch reads MKKRALVSVS…KNHKFVSVIV (145 aa).

This sequence belongs to the PurH family.

It carries out the reaction (6R)-10-formyltetrahydrofolate + 5-amino-1-(5-phospho-beta-D-ribosyl)imidazole-4-carboxamide = 5-formamido-1-(5-phospho-D-ribosyl)imidazole-4-carboxamide + (6S)-5,6,7,8-tetrahydrofolate. The catalysed reaction is IMP + H2O = 5-formamido-1-(5-phospho-D-ribosyl)imidazole-4-carboxamide. It functions in the pathway purine metabolism; IMP biosynthesis via de novo pathway; 5-formamido-1-(5-phospho-D-ribosyl)imidazole-4-carboxamide from 5-amino-1-(5-phospho-D-ribosyl)imidazole-4-carboxamide (10-formyl THF route): step 1/1. Its pathway is purine metabolism; IMP biosynthesis via de novo pathway; IMP from 5-formamido-1-(5-phospho-D-ribosyl)imidazole-4-carboxamide: step 1/1. This chain is Bifunctional purine biosynthesis protein PurH, found in Bacillus cereus (strain Q1).